Consider the following 1194-residue polypeptide: DNA polymerase catalytic subunit (1194 aa).

The protein belongs to the DNA polymerase type-B family. As to quaternary structure, forms a complex with the ssDNA-binding protein, the DNA polymerase processivity factor, and the alkaline exonuclease. Interacts with the helicase-primase complex composed of the primase, the helicase and the primase-associated factor; this interaction may coordinate leading and lagging strand DNA synthesis at the replication fork.

The protein localises to the host nucleus. The catalysed reaction is DNA(n) + a 2'-deoxyribonucleoside 5'-triphosphate = DNA(n+1) + diphosphate. It carries out the reaction Endonucleolytic cleavage to 5'-phosphomonoester.. Its function is as follows. Replicates viral genomic DNA. The replication complex is composed of six viral proteins: the DNA polymerase, processivity factor, primase, primase-associated factor, helicase, and ssDNA-binding protein. Additionally, the polymerase contains an intrinsic ribonuclease H (RNase H) activity that specifically degrades RNA/DNA heteroduplexes or duplex DNA substrates in the 5' to 3' direction. Therefore, it can catalyze the excision of the RNA primers that initiate the synthesis of Okazaki fragments at a replication fork during viral DNA replication. The sequence is that of DNA polymerase catalytic subunit from Varicella-zoster virus (strain Dumas) (HHV-3).